Consider the following 69-residue polypeptide: Putative membrane protein insertion efficiency factor (69 aa).

Belongs to the UPF0161 family.

Its subcellular location is the cell inner membrane. Functionally, could be involved in insertion of integral membrane proteins into the membrane. The protein is Putative membrane protein insertion efficiency factor of Nitrosomonas eutropha (strain DSM 101675 / C91 / Nm57).